We begin with the raw amino-acid sequence, 121 residues long: uncharacterized protein (121 aa).

This is an uncharacterized protein from Ictaluridae (bullhead catfishes).